We begin with the raw amino-acid sequence, 288 residues long: ATP synthase gamma chain (288 aa).

Belongs to the ATPase gamma chain family. As to quaternary structure, F-type ATPases have 2 components, CF(1) - the catalytic core - and CF(0) - the membrane proton channel. CF(1) has five subunits: alpha(3), beta(3), gamma(1), delta(1), epsilon(1). CF(0) has three main subunits: a, b and c.

It is found in the cell inner membrane. In terms of biological role, produces ATP from ADP in the presence of a proton gradient across the membrane. The gamma chain is believed to be important in regulating ATPase activity and the flow of protons through the CF(0) complex. In Stutzerimonas stutzeri (strain A1501) (Pseudomonas stutzeri), this protein is ATP synthase gamma chain.